Here is a 70-residue protein sequence, read N- to C-terminus: UPF0150 protein TM_1311 (70 aa).

This sequence belongs to the UPF0150 family.

In Thermotoga maritima (strain ATCC 43589 / DSM 3109 / JCM 10099 / NBRC 100826 / MSB8), this protein is UPF0150 protein TM_1311.